A 68-amino-acid polypeptide reads, in one-letter code: Cytochrome c3 (68 aa).

Positions 17, 20, 26, 29, 30, 45, 49, 52, 53, 62, 65, and 66 each coordinate heme.

In terms of processing, binds 3 heme groups per subunit.

Participates in sulfate respiration coupled with phosphorylation by transferring electrons from the enzyme dehydrogenase to ferredoxin. This chain is Cytochrome c3 (cyd), found in Desulfuromonas acetoxidans (Chloropseudomonas ethylica).